The sequence spans 90 residues: Small ribosomal subunit protein bS16 (90 aa).

The protein belongs to the bacterial ribosomal protein bS16 family.

In Lactococcus lactis subsp. cremoris (strain MG1363), this protein is Small ribosomal subunit protein bS16.